The primary structure comprises 328 residues: tRNA uridine(34) hydroxylase (328 aa).

A Rhodanese domain is found at 130–224 (LDEDTVVLDT…YGKDPEVQGE (95 aa)). Cysteine 184 acts as the Cysteine persulfide intermediate in catalysis.

Belongs to the TrhO family.

The catalysed reaction is uridine(34) in tRNA + AH2 + O2 = 5-hydroxyuridine(34) in tRNA + A + H2O. In terms of biological role, catalyzes oxygen-dependent 5-hydroxyuridine (ho5U) modification at position 34 in tRNAs. The polypeptide is tRNA uridine(34) hydroxylase (Streptococcus gordonii (strain Challis / ATCC 35105 / BCRC 15272 / CH1 / DL1 / V288)).